The chain runs to 178 residues: MFKQLYKDNIVKSLKDKFNYSNVMQVPKLVKVCINMGVGDAATDNKAINEPFDNLHSIAGQKPVLTFAKKSISGFKIRKGATVGCKVTLRRNKMYEFLERLIYIALPREKDFRGFSVKQFDGHGNFSFGIKEHISFLEIDYDKISKIRGMDINIITSAVSDKEAKELLLALKFPFFDN.

Belongs to the universal ribosomal protein uL5 family. As to quaternary structure, part of the 50S ribosomal subunit; part of the 5S rRNA/L5/L18/L25 subcomplex. Contacts the 5S rRNA and the P site tRNA. Forms a bridge to the 30S subunit in the 70S ribosome.

This is one of the proteins that bind and probably mediate the attachment of the 5S RNA into the large ribosomal subunit, where it forms part of the central protuberance. In the 70S ribosome it contacts protein S13 of the 30S subunit (bridge B1b), connecting the 2 subunits; this bridge is implicated in subunit movement. Contacts the P site tRNA; the 5S rRNA and some of its associated proteins might help stabilize positioning of ribosome-bound tRNAs. In Wolbachia pipientis subsp. Culex pipiens (strain wPip), this protein is Large ribosomal subunit protein uL5.